A 613-amino-acid polypeptide reads, in one-letter code: MKKAKLIFKDNTPFSLDFDDFYFNFKDGLNESKFVYTHSFEWKNQENFIIAESGFGIGLNFFLTLKRFLETTPSKRPKKLFYISVEAFYIEKEQLREIYQKLEFYEEFKELLEQFLKFYPKAKEGIYRFYFEDCFLDLVFEDIAVLKELDFKADVWYLDGFSPNKNSQMFDENLIFEVARLSKKNTQICTFSSASFLQKNLKKYGFRVEKTKGFRKREMIKAYLENELEFKDKEAYFSRTFSSLKNKKVAIIGAGISSAVLAYELSLRGFEIDIFEKHLELGKGASGNESGILSSLILKPKVNLGEFSELSFIEASRFYRQILDLEFKGVVEFAHNDLMQERFDTQRENVLFKISKNQAFLEEGGVIFPKKLVKNLFEKSKACIYFNHEFQAYKFENGCFSLKFKNDVVKSDYAVLIYAMGADAKDFVFYDEMKLSKVRGQVTHLKPFLDTPFPLSSKAYICPVKDDLQVIGASYDRLNASLESKEEDDKQNIENIADFMDKNTKLEIIGSKVGFRSYSSDRFMIVGNAYDEAFYKEEYKALLWTKNKEQKPAKMSCNLYFNFAHGSRGFSTSVLAARYLCALINNEPLCLEKKYIHAIHPARFLIRKLKKGL.

Residues Met-1–Glu-225 form a tRNA (mnm(5)s(2)U34)-methyltransferase region. The tract at residues Ile-252–Leu-613 is FAD-dependent cmnm(5)s(2)U34 oxidoreductase.

This sequence in the N-terminal section; belongs to the methyltransferase superfamily. tRNA (mnm(5)s(2)U34)-methyltransferase family. In the C-terminal section; belongs to the DAO family. FAD serves as cofactor.

It is found in the cytoplasm. It carries out the reaction 5-aminomethyl-2-thiouridine(34) in tRNA + S-adenosyl-L-methionine = 5-methylaminomethyl-2-thiouridine(34) in tRNA + S-adenosyl-L-homocysteine + H(+). Functionally, catalyzes the last two steps in the biosynthesis of 5-methylaminomethyl-2-thiouridine (mnm(5)s(2)U) at the wobble position (U34) in tRNA. Catalyzes the FAD-dependent demodification of cmnm(5)s(2)U34 to nm(5)s(2)U34, followed by the transfer of a methyl group from S-adenosyl-L-methionine to nm(5)s(2)U34, to form mnm(5)s(2)U34. This is tRNA 5-methylaminomethyl-2-thiouridine biosynthesis bifunctional protein MnmC from Campylobacter jejuni subsp. jejuni serotype O:2 (strain ATCC 700819 / NCTC 11168).